A 433-amino-acid chain; its full sequence is ATP-dependent protease ATPase subunit HslU (433 aa).

ATP-binding positions include isoleucine 18, 60–65 (GVGKTE), aspartate 246, glutamate 311, and arginine 383.

The protein belongs to the ClpX chaperone family. HslU subfamily. As to quaternary structure, a double ring-shaped homohexamer of HslV is capped on each side by a ring-shaped HslU homohexamer. The assembly of the HslU/HslV complex is dependent on binding of ATP.

It is found in the cytoplasm. Its function is as follows. ATPase subunit of a proteasome-like degradation complex; this subunit has chaperone activity. The binding of ATP and its subsequent hydrolysis by HslU are essential for unfolding of protein substrates subsequently hydrolyzed by HslV. HslU recognizes the N-terminal part of its protein substrates and unfolds these before they are guided to HslV for hydrolysis. The sequence is that of ATP-dependent protease ATPase subunit HslU from Cereibacter sphaeroides (strain KD131 / KCTC 12085) (Rhodobacter sphaeroides).